The primary structure comprises 359 residues: Transcription elongation factor A N-terminal and central domain-containing protein (359 aa).

A TFIIS N-terminal domain is found at 1–82; sequence MSDKNQIIAR…AKWRGFYKST (82 aa). A disordered region spans residues 84–118; the sequence is CKPRQSPKVLHTNANKEESAAVSQDVSQDETSGSS. Residues 104–118 show a composition bias toward polar residues; sequence AVSQDVSQDETSGSS. The region spanning 182–298 is the TFIIS central domain; the sequence is VRSKCVELLY…EHCLPQSVDG (117 aa).

The protein is Transcription elongation factor A N-terminal and central domain-containing protein (Tceanc) of Mus musculus (Mouse).